Reading from the N-terminus, the 383-residue chain is Putative glutamate--cysteine ligase 2-2 (383 aa).

This sequence belongs to the glutamate--cysteine ligase type 2 family. YbdK subfamily.

It carries out the reaction L-cysteine + L-glutamate + ATP = gamma-L-glutamyl-L-cysteine + ADP + phosphate + H(+). Functionally, ATP-dependent carboxylate-amine ligase which exhibits weak glutamate--cysteine ligase activity. This Legionella pneumophila (strain Lens) protein is Putative glutamate--cysteine ligase 2-2.